The primary structure comprises 213 residues: Sclerostin (213 aa).

The signal sequence occupies residues 1–23; that stretch reads MQLPLALCLVCLLVHTAFRVVEG. The disordered stretch occupies residues 41–71; it reads GEYPEPPPELENNKTMNRAENGGRPPHHPFE. Residue asparagine 53 is glycosylated (N-linked (GlcNAc...) asparagine). Intrachain disulfides connect cysteine 80–cysteine 134, cysteine 94–cysteine 148, cysteine 105–cysteine 165, and cysteine 109–cysteine 167. Residues 82–172 enclose the CTCK domain; that stretch reads ELHFTRYVTD…ASCKCKRLTR (91 aa). N-linked (GlcNAc...) asparagine glycosylation is present at asparagine 175. The disordered stretch occupies residues 178–213; the sequence is ELKDFGTEAARPQKGRKPRPRARSAKANQAELENAY. Over residues 190–201 the composition is skewed to basic residues; the sequence is QKGRKPRPRARS.

The protein belongs to the sclerostin family. As to quaternary structure, interacts with LRP4 (via the extracellular domain); the interaction facilitates the inhibition of Wnt signaling. Interacts with LRP5 (via the first two YWTD-EGF repeat domains); the interaction inhibits Wnt-mediated signaling. Interacts with LRP6. As to expression, widely expressed at low levels with highest levels in bone, cartilage, kidney, liver, bone marrow and primary osteoblasts differentiated for 21 days. Detected in the subendothelial layer of the aortic intima (at protein level).

Its subcellular location is the secreted. It localises to the extracellular space. The protein resides in the extracellular matrix. Functionally, negative regulator of bone growth that acts through inhibition of Wnt signaling and bone formation. This is Sclerostin from Homo sapiens (Human).